A 387-amino-acid polypeptide reads, in one-letter code: Homoserine O-succinyltransferase (387 aa).

One can recognise an AB hydrolase-1 domain in the interval 45–354 (NAVLVCHALN…DAPHGHDAFL (310 aa)). Residue Ser151 is the Nucleophile of the active site. Arg221 lines the substrate pocket. Active-site residues include Asp317 and His350. Residue Asp351 participates in substrate binding.

Belongs to the AB hydrolase superfamily. MetX family. In terms of assembly, homodimer.

Its subcellular location is the cytoplasm. The enzyme catalyses L-homoserine + succinyl-CoA = O-succinyl-L-homoserine + CoA. The protein operates within amino-acid biosynthesis; L-methionine biosynthesis via de novo pathway; O-succinyl-L-homoserine from L-homoserine: step 1/1. In terms of biological role, transfers a succinyl group from succinyl-CoA to L-homoserine, forming succinyl-L-homoserine. The sequence is that of Homoserine O-succinyltransferase from Methylibium petroleiphilum (strain ATCC BAA-1232 / LMG 22953 / PM1).